A 125-amino-acid polypeptide reads, in one-letter code: Ribosome-binding factor A (125 aa).

It belongs to the RbfA family. As to quaternary structure, monomer. Binds 30S ribosomal subunits, but not 50S ribosomal subunits or 70S ribosomes.

The protein localises to the cytoplasm. One of several proteins that assist in the late maturation steps of the functional core of the 30S ribosomal subunit. Associates with free 30S ribosomal subunits (but not with 30S subunits that are part of 70S ribosomes or polysomes). Required for efficient processing of 16S rRNA. May interact with the 5'-terminal helix region of 16S rRNA. The polypeptide is Ribosome-binding factor A (Xylella fastidiosa (strain M12)).